Consider the following 224-residue polypeptide: PHD finger-containing protein 5 (224 aa).

The PHD-type zinc finger occupies lysine 31–phenylalanine 81. Cysteine 34, cysteine 37, cysteine 49, cysteine 52, histidine 58, cysteine 61, cysteine 75, and cysteine 78 together coordinate Zn(2+). Residues proline 116–serine 137 form a disordered region.

In terms of assembly, interacts directly with AIPP3/BDT1.

In terms of biological role, together with AIPP3/BDT1, cooperates to form a BAH-PHD bivalent histone reader complex able to read histone H3 lysine 27 trimethylation (H3K27me3) histone marks in order to regulate transcription, especially to prevent early flowering; promotes AIPP3/BDT1 binding to H3K27me3. The chain is PHD finger-containing protein 5 from Arabidopsis thaliana (Mouse-ear cress).